The chain runs to 627 residues: MPIRQLSETMINQIAAGEVIERPASVVKELVENALDAGASRVEVVTAGGGLNLIRVTDDGSGIPEPELALAIARHCTSKLAEDINDIRSLGFRGEALPSIGSVSRLSIRSRTALGDSAAEIGIEGGRVLPVRPAAANRGTTVEVRDLFFATPARLKFMKGERAESSATSDVVKRIAIAFPAVRFTLAGSDRSTLELPATDDSPEGSLRRVAQVMGAEFPDNSIAIDAMREGVHLTGHVSIPSFSRANALQQYAYVNGRPVRDKLIAGAIRGAFADVLPRDRHAVTVLFLTLDPAIVDVNVHPAKADVRFRDPGLVRGLIVGAIRQALADAGIRSATTGAAGMMAAFRPGAASYNHGGPANGHRSYEAAYRASGSAGFDPARSPQRPLDMQFGDFERAGARHGGFSEPGQAAFDTGPLVSADARVGQNETTETLLGTVLGAARAQVHENYIVAQTRDSLVIVDQHAAHERLVYEALKNALHSRPVPSQMLLLPEIIDLPEEDAERLAMHSETLARFGLGIERFGPGAVAVRETPSMLGETNVQQLVRDLADEIADNDTVETLKERLDKIAATMACHGSVRSGRLLKAEEMNALLRQMEATPGSGTCNHGRPTYIELKLADIERLFGRR.

Belongs to the DNA mismatch repair MutL/HexB family.

Its function is as follows. This protein is involved in the repair of mismatches in DNA. It is required for dam-dependent methyl-directed DNA mismatch repair. May act as a 'molecular matchmaker', a protein that promotes the formation of a stable complex between two or more DNA-binding proteins in an ATP-dependent manner without itself being part of a final effector complex. This chain is DNA mismatch repair protein MutL, found in Mesorhizobium japonicum (strain LMG 29417 / CECT 9101 / MAFF 303099) (Mesorhizobium loti (strain MAFF 303099)).